Here is a 482-residue protein sequence, read N- to C-terminus: Beta-1,3-glucan-binding protein 2 (482 aa).

The signal sequence occupies residues Met-1–Gln-18. One can recognise a CBM39 domain in the interval Tyr-23–Asn-122. N-linked (GlcNAc...) asparagine glycosylation occurs at Asn-124. Positions Val-127–Arg-153 are disordered. The GH16 domain occupies Val-128–Leu-482. Residue Asn-189 is glycosylated (N-linked (GlcNAc...) asparagine).

As to quaternary structure, monomer. N-glycosylated. As to expression, cuticle and fat body.

The protein resides in the secreted. Functionally, involved in the recognition of invading microorganisms. Binds specifically to beta-1,3-glucan and lipoteichoic acid and causes aggregation of invading microorganisms. Binding to beta-1,3-glucan activates the phenoloxidase cascade. In Manduca sexta (Tobacco hawkmoth), this protein is Beta-1,3-glucan-binding protein 2.